The sequence spans 830 residues: Cadherin-16 (830 aa).

Positions 1–21 (MISARPWLLYLSVIQAFTTEA) are cleaved as a signal peptide. Residues 22–788 (QPAESLHTEV…MKGMPTKLSA (767 aa)) lie on the Extracellular side of the membrane. 6 consecutive Cadherin domains span residues 27–128 (LHTE…VPQF), 133–237 (YRAQ…SIVE), 244–338 (EPVH…APVC), 343–451 (PTVN…APEF), 457–566 (GPVT…PLKL), and 571–667 (YETS…VPAL). Residues N519, N604, and N724 are each glycosylated (N-linked (GlcNAc...) asparagine). The interval 668–788 (TLSAGPSRHL…MKGMPTKLSA (121 aa)) is ectodomain G. Residues 789–809 (VGVLLGTLAAIGFILILVFTH) traverse the membrane as a helical segment. Over 810-830 (LALARKDLDQPADSVPLKAAV) the chain is Cytoplasmic. S823 is modified (phosphoserine).

Kidney specific.

It is found in the cell membrane. Its function is as follows. Cadherins are calcium-dependent cell adhesion proteins. They preferentially interact with themselves in a homophilic manner in connecting cells; cadherins may thus contribute to the sorting of heterogeneous cell types. The chain is Cadherin-16 (Cdh16) from Mus musculus (Mouse).